Consider the following 399-residue polypeptide: uncharacterized protein (399 aa).

WD repeat units follow at residues 59 to 99 (EHKD…QICQ), 102 to 141 (GHKD…EFIT), 144 to 185 (ETVD…QVMY), 187 to 227 (HTAP…PECR), 241 to 280 (ETAA…ILAS), 283 to 322 (AQTE…FRKS), 324 to 363 (PHEQ…LLGE), and 366 to 399 (GHQE…DCEH).

It localises to the cytoplasm. The protein localises to the nucleus. This is an uncharacterized protein from Schizosaccharomyces pombe (strain 972 / ATCC 24843) (Fission yeast).